Consider the following 462-residue polypeptide: Flavin-containing monooxygenase FMO GS-OX3 (462 aa).

17–22 serves as a coordination point for FAD; the sequence is GAGPAG. 212–217 lines the NADP(+) pocket; the sequence is GNFASG. A helical transmembrane segment spans residues 318–338; sequence ALAPGLAFVGLPAMGIVFVMF.

It belongs to the FMO family.

It localises to the membrane. The catalysed reaction is a (Z)-omega-(methylsulfanyl)-N-sulfo-alkylhydroximate S-glucoside + NADPH + O2 + H(+) = a (Z)-omega-(methylsulfinyl)-alkyl-glucosinolate + NADP(+) + H2O. Catalyzes the conversion of methylthioalkyl glucosinolates of any chain length into methylsulfinylalkyl glucosinolates. Prefers probably short-chain methylthioalkyl glucosinolates in cv. Landsberg erecta. This is Flavin-containing monooxygenase FMO GS-OX3 (FMOGS-OX3) from Arabidopsis thaliana (Mouse-ear cress).